Reading from the N-terminus, the 432-residue chain is Trigger factor (432 aa).

The PPIase FKBP-type domain occupies 161 to 246 (EDRVTIDFTG…LKKVEERELP (86 aa)).

This sequence belongs to the FKBP-type PPIase family. Tig subfamily. Homodimer and monomer. In vivo most of the ribosomes are in complex with monomeric TF. Uncomplexed TF, however, is in a monomer-dimer equilibrium with approximately two thirds of TF existing in a dimeric state.

Its subcellular location is the cytoplasm. It catalyses the reaction [protein]-peptidylproline (omega=180) = [protein]-peptidylproline (omega=0). In terms of biological role, involved in protein export. Acts as a chaperone by maintaining the newly synthesized protein in an open conformation. Functions as a peptidyl-prolyl cis-trans isomerase. The chain is Trigger factor from Shigella dysenteriae serotype 1 (strain Sd197).